Consider the following 657-residue polypeptide: Interferon-induced GTP-binding protein Mx1 (657 aa).

At methionine 1 the chain carries N-acetylmethionine. Residues 63–336 enclose the Dynamin-type G domain; sequence DLALPAIAVI…LITHICKTLP (274 aa). The segment at 73–80 is G1 motif; it reads GDQSSGKS. 73-80 contributes to the GTP binding site; that stretch reads GDQSSGKS. A G2 motif region spans residues 98–100; the sequence is VTR. Positions 174–177 are G3 motif; that stretch reads DLPG. GTP contacts are provided by residues 174-178 and 243-246; these read DLPGI and TKPD. A G4 motif region spans residues 243 to 246; it reads TKPD. A G5 motif region spans residues 275 to 278; sequence KCRG. Positions 337–362 are bundle signaling element (BSE); sequence LLENQIKENHEKITEELQKYGSDVPE. The tract at residues 362–529 is middle domain; the sequence is EDEHEKMFFL…HFQMEQIVYC (168 aa). The stalk stretch occupies residues 363–627; that stretch reads DEHEKMFFLI…KDTYSWLLKE (265 aa). The segment covering 540–551 has biased composition (basic and acidic residues); sequence RVREKDSDEEKK. The segment at 540–559 is disordered; it reads RVREKDSDEEKKKKTSSMSH. The interval 550-553 is critical for lipid-binding; the sequence is KKKK. The GED domain maps to 569–657; that stretch reads LSEILEHLLA…ARRRLAKFPG (89 aa).

It belongs to the TRAFAC class dynamin-like GTPase superfamily. Dynamin/Fzo/YdjA family. Homooligomer. Oligomerizes into multimeric filamentous or ring-like structures by virtue of its stalk domain. Oligomerization is critical for GTPase activity, protein stability, and recognition of viral target structures. Interacts with TRPC1, TRPC3, TRPC4, TRPC5, TRPC6 and TRPC7. Interacts with HSPA5. Interacts with TUBB/TUBB5. Interacts with DDX39A and DDX39B. In terms of processing, ISGylated.

It localises to the cytoplasm. Its subcellular location is the endoplasmic reticulum membrane. It is found in the perinuclear region. Its function is as follows. Interferon-induced dynamin-like GTPase with antiviral activity. In Canis lupus familiaris (Dog), this protein is Interferon-induced GTP-binding protein Mx1 (MX1).